Consider the following 207-residue polypeptide: 2,3-bisphosphoglycerate-dependent phosphoglycerate mutase (207 aa).

Substrate contacts are provided by residues 10–17 (RHGQSEWN), 23–24 (TG), R62, 89–92 (ERDY), K100, 116–117 (RR), and 160–161 (GN). Catalysis depends on H11, which acts as the Tele-phosphohistidine intermediate. The active-site Proton donor/acceptor is the E89.

It belongs to the phosphoglycerate mutase family. BPG-dependent PGAM subfamily. In terms of assembly, homodimer.

The catalysed reaction is (2R)-2-phosphoglycerate = (2R)-3-phosphoglycerate. It functions in the pathway carbohydrate degradation; glycolysis; pyruvate from D-glyceraldehyde 3-phosphate: step 3/5. Catalyzes the interconversion of 2-phosphoglycerate and 3-phosphoglycerate. The polypeptide is 2,3-bisphosphoglycerate-dependent phosphoglycerate mutase (Bradyrhizobium diazoefficiens (strain JCM 10833 / BCRC 13528 / IAM 13628 / NBRC 14792 / USDA 110)).